The chain runs to 740 residues: 1,4-alpha-glucan branching enzyme GlgB (740 aa).

The active-site Nucleophile is the D409. The active-site Proton donor is the E462.

It belongs to the glycosyl hydrolase 13 family. GlgB subfamily. In terms of assembly, monomer.

The catalysed reaction is Transfers a segment of a (1-&gt;4)-alpha-D-glucan chain to a primary hydroxy group in a similar glucan chain.. It participates in glycan biosynthesis; glycogen biosynthesis. Its function is as follows. Catalyzes the formation of the alpha-1,6-glucosidic linkages in glycogen by scission of a 1,4-alpha-linked oligosaccharide from growing alpha-1,4-glucan chains and the subsequent attachment of the oligosaccharide to the alpha-1,6 position. The sequence is that of 1,4-alpha-glucan branching enzyme GlgB from Methylococcus capsulatus (strain ATCC 33009 / NCIMB 11132 / Bath).